The sequence spans 151 residues: Protein Turandot Z (151 aa).

An N-terminal signal peptide occupies residues 1-23 (MSRLIHLSFVLALLACLTGPISA).

This sequence belongs to the Turandot family.

The protein resides in the secreted. Its function is as follows. A humoral factor that may play a role in stress tolerance. This chain is Protein Turandot Z, found in Drosophila pseudoobscura pseudoobscura (Fruit fly).